Reading from the N-terminus, the 115-residue chain is Macroconotoxin Mu8.1 (115 aa).

An N-terminal signal peptide occupies residues 1–21 (MDMKMTFSGLVLVVLVTTVVG). Positions 22 to 26 (SSVRR) are excised as a propeptide. Intrachain disulfides connect cysteine 36/cysteine 77, cysteine 44/cysteine 60, cysteine 48/cysteine 56, cysteine 83/cysteine 115, and cysteine 87/cysteine 97. Glutamate 40 contributes to the Zn(2+) binding site. Histidine 68 contributes to the Zn(2+) binding site.

As to quaternary structure, mostly found as a homodimer in solution; non-covalently bound. Expressed by the venom duct.

It localises to the secreted. In terms of biological role, modestly and reversibly inhibits Cav2.3/CACNA1E (IC(50)=5.8 uM) recombinantly expressed in HEK293 cells without affecting the voltage dependence of activation. In mouse DRG sensory neurons, modulates depolarization-induced calcium influx. This is Macroconotoxin Mu8.1 from Conus mucronatus (Pointed cone).